Reading from the N-terminus, the 426-residue chain is MIDLKLLRKDPQHFYEALKKRNYSTDIIDEIVNLDKEWRNQLNIVNNLKAKRNELSKLVARYKAEGKNQEAEEIIAESKKIGEEIAQYEGKQKELEEKMYNLALYIPNPPHESVPVGKDETENVEIRRWGEPRKFDFEPKAHWDLGPELGMLDFDRGSKLSGSRFTVMFGAIAKLERAIAQFMLDVHTKNGYIEVNVPHLVKRETITATGQLPKFSEELYTCERDDLFLIPTAEVSLAALHIDEILEENKLPKKYTAFTPCYRREAGSYGKDVRGLIRQHQFEKVELVWYTTPERSFEDLEQLTQDAERILQLLGLPYRVVTLCTGDLGFAAAKTYDIEVWLPSYNSYKEISSCSNVTDFQARRGNIRYRAKDGKLNYVHTLNGSGLAIGRTLVAIMENYQNPDGTITIPEVLRPYMGTDIIKPME.

Thr-232–Glu-234 is a binding site for L-serine. An ATP-binding site is contributed by Arg-263 to Glu-265. Glu-286 serves as a coordination point for L-serine. Glu-350–Ser-353 is a binding site for ATP. Residue Ser-385 participates in L-serine binding.

It belongs to the class-II aminoacyl-tRNA synthetase family. Type-1 seryl-tRNA synthetase subfamily. Homodimer. The tRNA molecule binds across the dimer.

It localises to the cytoplasm. The catalysed reaction is tRNA(Ser) + L-serine + ATP = L-seryl-tRNA(Ser) + AMP + diphosphate + H(+). It catalyses the reaction tRNA(Sec) + L-serine + ATP = L-seryl-tRNA(Sec) + AMP + diphosphate + H(+). The protein operates within aminoacyl-tRNA biosynthesis; selenocysteinyl-tRNA(Sec) biosynthesis; L-seryl-tRNA(Sec) from L-serine and tRNA(Sec): step 1/1. Functionally, catalyzes the attachment of serine to tRNA(Ser). Is also able to aminoacylate tRNA(Sec) with serine, to form the misacylated tRNA L-seryl-tRNA(Sec), which will be further converted into selenocysteinyl-tRNA(Sec). This chain is Serine--tRNA ligase, found in Fervidobacterium nodosum (strain ATCC 35602 / DSM 5306 / Rt17-B1).